A 258-amino-acid polypeptide reads, in one-letter code: MSEASSPLKVWLERDGSLLRLRLARPKANIVDAAMIAAMRQALGEHLQAPALRAVLLDAEGPHFSFGASVDEHMPDQCAQMLKSLHGLVREMLDSPVPILVALRGQCLGGGLEVAAAGNLLFAAPDAKFGQPEIRLGVFAPAASCLLPPRVGQACAEDLLWSGRSIDGAEGHRIGLIDVLAEDPEAAALRWFDEHIARLSASSLRFAVRAARCDSVPRIKQKLDTVEALYLEELMASHDAVEGLKAFLEKRSANWENR.

The protein belongs to the enoyl-CoA hydratase/isomerase family.

It catalyses the reaction cyclohexa-1,5-diene-1-carbonyl-CoA + H2O = 6-hydroxycyclohex-1-ene-1-carbonyl-CoA. Its pathway is aromatic compound metabolism; benzoyl-CoA degradation. Functionally, catalyzes the hydration of cyclohexa-1,5-diene-1-carboxyl-CoA. This Thauera aromatica protein is Cyclohexa-1,5-dienecarbonyl-CoA hydratase (dch).